The primary structure comprises 389 residues: Major outer membrane porin (389 aa).

Belongs to the chlamydial porin (CP) (TC 1.B.2) family. As to quaternary structure, part of a disulfide cross-linked outer membrane complex (COMC) composed of the major outer membrane porin (MOMP), the small cysteine-rich protein (OmcA) and the large cysteine-rich periplasmic protein (OmcB).

The protein localises to the cell outer membrane. In terms of biological role, in elementary bodies (EBs, the infectious stage, which is able to survive outside the host cell) provides the structural integrity of the outer envelope through disulfide cross-links with the small cysteine-rich protein and the large cysteine-rich periplasmic protein. It has been described in publications as the Sarkosyl-insoluble COMC (Chlamydia outer membrane complex), and serves as the functional equivalent of peptidoglycan. Its function is as follows. Permits diffusion of specific solutes through the outer membrane. The polypeptide is Major outer membrane porin (ompA) (Chlamydia pneumoniae (Chlamydophila pneumoniae)).